The chain runs to 196 residues: Large ribosomal subunit protein bL25 (196 aa).

Residues 177–196 are disordered; that stretch reads VISIAPPKKDAEAETESAAG.

This sequence belongs to the bacterial ribosomal protein bL25 family. CTC subfamily. Part of the 50S ribosomal subunit; part of the 5S rRNA/L5/L18/L25 subcomplex. Contacts the 5S rRNA. Binds to the 5S rRNA independently of L5 and L18.

In terms of biological role, this is one of the proteins that binds to the 5S RNA in the ribosome where it forms part of the central protuberance. The sequence is that of Large ribosomal subunit protein bL25 from Chlorobium limicola (strain DSM 245 / NBRC 103803 / 6330).